A 97-amino-acid polypeptide reads, in one-letter code: uncharacterized protein (97 aa).

Residues Met1–Asp24 show a composition bias toward basic and acidic residues. The interval Met1 to Asp97 is disordered. Residues Ser31–Gln43 are compositionally biased toward low complexity. The segment covering Thr44–Thr53 has biased composition (basic and acidic residues).

This is an uncharacterized protein from Bacillus subtilis (strain 168).